The chain runs to 414 residues: 2,3-diketo-5-methylthiopentyl-1-phosphate enolase (414 aa).

Residue Lys99 is the Proton acceptor of the active site. Residues Lys148, 174-177 (KDDE), His265, Gly338, and 360-361 (GG) contribute to the substrate site. Lys174, Asp176, and Glu177 together coordinate Mg(2+). Lys174 is modified (N6-carboxylysine).

The protein belongs to the RuBisCO large chain family. Type IV subfamily. In terms of assembly, homodimer. Mg(2+) is required as a cofactor.

The catalysed reaction is 5-methylsulfanyl-2,3-dioxopentyl phosphate = 2-hydroxy-5-methylsulfanyl-3-oxopent-1-enyl phosphate. The protein operates within amino-acid biosynthesis; L-methionine biosynthesis via salvage pathway; L-methionine from S-methyl-5-thio-alpha-D-ribose 1-phosphate: step 3/6. In terms of biological role, catalyzes the enolization of 2,3-diketo-5-methylthiopentyl-1-phosphate (DK-MTP-1-P) into 2-hydroxy-3-keto-5-methylthiopentenyl-1-phosphate (HK-MTPenyl-1-P). This chain is 2,3-diketo-5-methylthiopentyl-1-phosphate enolase, found in Bacillus mycoides (strain KBAB4) (Bacillus weihenstephanensis).